The primary structure comprises 1397 residues: MFNDQSKTTSSVKGICATTDNNHGNLKKTNSTPFRKNYLLNGRTKLKLENFAYNASTEISSPKISEKKHSSLPIKRKNTFNESSTSFSPFTKAHKEITDDLKPDKSFTRKSDLNSQDMPVCFQETSKDLCRSSSTQHLLDHQTTDSTIIDMKPVSTNSKSDVFTLYTDETVLLRRCASDNKPLINNNLSSSNVSENQSRSFGSYDEVKNQGNNLHKVPSLVSIIRNARSSEQSRIAANSSCLLKGSDTEIDEDDFALEAEDLAALDSLERQYSQLPNSTVTASAKDIEKTAKVNHVGGDLQSYCSATKASDATINEEPVNLALDKACNSLPDINSDFIDDWDDSCDGCTPGELCEFSSEYTVLEVHEDFIFHEGNHFRQLKLILEANDILHQLFLRGDWTETSIFVGDSIRVEATFDKDNTAIVDNDKGLIIIHPKILMSATAVASSFPCLRKAVISDRVGIYGPPTKAMVTGNILHDFFQHALYRGIDALENVDINLETSIKTYISDIYFADLSLDEIREELDARLPLLKSIVERYLISKKNDNNNESIHISRLLDIEESIWSPRFGLKGNIDATVEVVLTEKPESSSTLTLPLELKTGRYVDNISHFAQSLLYTLLISDRYGINTNQALLCYLENSTIKNLVASNSQLRGLIMTRNSLAQHNFRRSLPEMISNRKICDHCSLVSECLFFQKMSDKGVANSNGLTESWNEWMREVKDEDLEFYKKWEKLLNQEERLLLLKRGDVLTFDTEELEAYGKTLYPLYITKEDIVCLEIDDRVFHYKFAFLNDNGYPRNFLHSGFSVGERVFISDEHGHWSLAKGHIVHIQDSCIEVRTRHRLHIPWLKMPNFDFKKNQVFFGNYEDSKLSFIGSNHTRYRIDKDEFSSGIASIRGTLMSSVLPDAPLIIRDMIIRLKPPKFCNSALIDPEFLKCLNEDQITALKKCHAAEHYSLILGMPGTGKTTTISSLIRSLLAKKKKILLTSFTHLAVDNILIKLKGCDSTIVRLGSPHKIHPLVKEFCLTEGTTFDDLASLKHFYEDPQIVACSSLGVYHSIFNKRKFDYCIIDEASQIPLPICLGPLQLAEKFVLVGDHYQLPPLVKNSRTSKDGLSLSLFKLLSEKHPEAVTTLRLQYRMNEDINSLSSELIYGGNLVCGSKTISQKKLILPKAHLSDGLPDSSSSLHWVNKLINPSHSVIFFNTDDILGVESKTNNILENHTEAFLIEQAVSSFLERGVKQSSIGIISIYKSQVELLSKNLKSFTEIEINTVDRYQGRDKDIILISFVRSNSKNLVGELLRDWHRLNVALSRAKVKCIMFGSLSTLSSSNIVSHLLKLLEKNKWIFTLNENDIATKFDENSSPIKDCSQVATTNNAKVIIRKNQRFFNSDNLCEKAILPQLEF.

Positions 1-32 (MFNDQSKTTSSVKGICATTDNNHGNLKKTNST) are disordered. Serine 134 carries the post-translational modification Phosphoserine. Serine 219 carries the phosphoserine; by CHEK2 modification. The tract at residues 390 to 808 (LHQLFLRGDW…SGFSVGERVF (419 aa)) is nuclease activity. Positions 450, 679, 682, and 688 each coordinate [4Fe-4S] cluster. Residues 809–1397 (ISDEHGHWSL…EKAILPQLEF (589 aa)) form a helicase activity region. 954-961 (GMPGTGKT) contacts ATP.

Belongs to the DNA2/NAM7 helicase family. As to quaternary structure, interacts with cdc1, cdc24 and rad2. It depends on [4Fe-4S] cluster as a cofactor. In terms of processing, phosphorylated at Ser-219 by cds1/check2, leading to association with stalled replication forks.

The protein localises to the cytoplasm. It localises to the nucleus. The protein resides in the chromosome. Its subcellular location is the telomere. It carries out the reaction ATP + H2O = ADP + phosphate + H(+). Functionally, key enzyme involved in DNA replication and DNA repair. Involved in Okazaki fragments processing by cleaving long flaps that escape fen1: flaps that are longer than 27 nucleotides are coated by replication protein A complex (RPA), leading to recruit dna2 which cleaves the flap until it is too short to bind RPA and becomes a substrate for fen1. Is a target of the intra-S phase checkpoint, associating with stalled replication forks when phosphorylated at Ser-219 and preventing the stalled replication forks from reversing. Also involved in 5'-end resection of DNA during double-strand break (DSB) repair by mediating the cleavage of 5'-ssDNA. Also required for the production of G-rich single-strand overhangs at telomere ends and thus in telomere length maintenance. Possesses different enzymatic activities, such as single-stranded DNA (ssDNA)-dependent ATPase, 5'-3' helicase and endonuclease activities. While the ATPase and endonuclease activities are well-defined and play a key role in Okazaki fragments processing and DSB repair, the 5'-3' DNA helicase activity is atypical: it cannot load onto its tracking strand internally and has an absolute free 5'-end requirement. Helicase activity may promote the motion of dna2 on the flap, helping the nuclease function. In Schizosaccharomyces pombe (strain 972 / ATCC 24843) (Fission yeast), this protein is DNA replication ATP-dependent helicase/nuclease dna2 (dna2).